The following is a 201-amino-acid chain: Lipopolysaccharide core heptose(II)-phosphate phosphatase (201 aa).

Positions 1-35 (MLAFTLRFIKNKRYLATLAGALVIIAGLTSQHAWS) are cleaved as a signal peptide.

It belongs to the phosphoglycerate mutase family. Ais subfamily.

Its subcellular location is the periplasm. The protein operates within bacterial outer membrane biogenesis; lipopolysaccharide metabolism. Functionally, catalyzes the dephosphorylation of heptose(II) of the outer membrane lipopolysaccharide core. The protein is Lipopolysaccharide core heptose(II)-phosphate phosphatase of Salmonella heidelberg (strain SL476).